The following is a 110-amino-acid chain: Large ribosomal subunit protein uL22 (110 aa).

This sequence belongs to the universal ribosomal protein uL22 family. Part of the 50S ribosomal subunit.

Functionally, this protein binds specifically to 23S rRNA; its binding is stimulated by other ribosomal proteins, e.g. L4, L17, and L20. It is important during the early stages of 50S assembly. It makes multiple contacts with different domains of the 23S rRNA in the assembled 50S subunit and ribosome. In terms of biological role, the globular domain of the protein is located near the polypeptide exit tunnel on the outside of the subunit, while an extended beta-hairpin is found that lines the wall of the exit tunnel in the center of the 70S ribosome. In Shewanella frigidimarina (strain NCIMB 400), this protein is Large ribosomal subunit protein uL22.